The primary structure comprises 257 residues: MKDTSLALHFVSSGTKESLSAQKDLVERYGHVAAEDADIIVALGGDGTMLQALRDFMNTGKPIYGMNRGSVGFLMNEFVIENLPERILAAQMETIRPLVMVAETEDAPPVEALAINEVSLFRQSYQAARIRITIDGKVRLQELVCDGVMVATPAGSTAYNLSAQGPILPLEAPLLALTPVSPFRPRRWGGALLPKHVTVRMDLLETEKRPVNAVADNNEVKSVTSVTVREAPNSQVTILFDKNHSWDERILTEQFRH.

Asp46 acts as the Proton acceptor in catalysis. NAD(+)-binding positions include 46-47 (DG), 116-117 (NE), Asp146, Ala154, 157-162 (TAYNLS), and Asn218.

This sequence belongs to the NAD kinase family. A divalent metal cation serves as cofactor.

It localises to the cytoplasm. It carries out the reaction NAD(+) + ATP = ADP + NADP(+) + H(+). Functionally, involved in the regulation of the intracellular balance of NAD and NADP, and is a key enzyme in the biosynthesis of NADP. Catalyzes specifically the phosphorylation on 2'-hydroxyl of the adenosine moiety of NAD to yield NADP. The protein is NAD kinase of Brucella suis biovar 1 (strain 1330).